A 272-amino-acid polypeptide reads, in one-letter code: 2-dehydro-3-deoxyphosphooctonate aldolase (272 aa).

It belongs to the KdsA family.

It localises to the cytoplasm. The catalysed reaction is D-arabinose 5-phosphate + phosphoenolpyruvate + H2O = 3-deoxy-alpha-D-manno-2-octulosonate-8-phosphate + phosphate. The protein operates within carbohydrate biosynthesis; 3-deoxy-D-manno-octulosonate biosynthesis; 3-deoxy-D-manno-octulosonate from D-ribulose 5-phosphate: step 2/3. Its pathway is bacterial outer membrane biogenesis; lipopolysaccharide biosynthesis. This is 2-dehydro-3-deoxyphosphooctonate aldolase from Geotalea uraniireducens (strain Rf4) (Geobacter uraniireducens).